A 338-amino-acid polypeptide reads, in one-letter code: Ketol-acid reductoisomerase (NADP(+)) (338 aa).

In terms of domain architecture, KARI N-terminal Rossmann spans 1–181 (MKVFYDKDAD…GGGRAGIIET (181 aa)). NADP(+)-binding positions include 24–27 (YGSQ), Arg47, and Ser52. Residue His107 is part of the active site. Residue Gly133 coordinates NADP(+). Residues 182–327 (NFREETETDL…EKLRAMMPWI (146 aa)) form the KARI C-terminal knotted domain. The Mg(2+) site is built by Asp190, Glu194, Glu226, and Glu230. Ser251 is a substrate binding site.

The protein belongs to the ketol-acid reductoisomerase family. Requires Mg(2+) as cofactor.

The enzyme catalyses (2R)-2,3-dihydroxy-3-methylbutanoate + NADP(+) = (2S)-2-acetolactate + NADPH + H(+). It catalyses the reaction (2R,3R)-2,3-dihydroxy-3-methylpentanoate + NADP(+) = (S)-2-ethyl-2-hydroxy-3-oxobutanoate + NADPH + H(+). The protein operates within amino-acid biosynthesis; L-isoleucine biosynthesis; L-isoleucine from 2-oxobutanoate: step 2/4. It participates in amino-acid biosynthesis; L-valine biosynthesis; L-valine from pyruvate: step 2/4. In terms of biological role, involved in the biosynthesis of branched-chain amino acids (BCAA). Catalyzes an alkyl-migration followed by a ketol-acid reduction of (S)-2-acetolactate (S2AL) to yield (R)-2,3-dihydroxy-isovalerate. In the isomerase reaction, S2AL is rearranged via a Mg-dependent methyl migration to produce 3-hydroxy-3-methyl-2-ketobutyrate (HMKB). In the reductase reaction, this 2-ketoacid undergoes a metal-dependent reduction by NADPH to yield (R)-2,3-dihydroxy-isovalerate. This is Ketol-acid reductoisomerase (NADP(+)) from Cupriavidus taiwanensis (strain DSM 17343 / BCRC 17206 / CCUG 44338 / CIP 107171 / LMG 19424 / R1) (Ralstonia taiwanensis (strain LMG 19424)).